Consider the following 336-residue polypeptide: MIEADRLISAASNQPEDVVDRAIRPKLLEEYIGQPQVRSQMEIFIQAAKLRGEALDHLLIFGPPGLGKTTLANIVANEMGVNLRTTSGPVLEKAGDLAAMLTNLEPHDVLFIDEIHRLSPVVEEVLYPAMEDYQLDIMIGEGPAARSIKIDLPPFTLIGATTRAGSLTSPLRDRFGIVQRLEFYQVPDLQYIVGRSARFMGLELSDEGAFEVAKRSRGTPRIANRLLRRVRDFAEVKHDGTISLDVAAQALDMLNVDAEGFDYMDRKLLLAILDKFFGGPVGLDNLAAAIGEERETIEDVLEPYLIQQGFLQRTPRGRMATVRAWNHFGITPPEMP.

The segment at 4–184 (ADRLISAASN…FGIVQRLEFY (181 aa)) is large ATPase domain (RuvB-L). Residues I23, R24, G65, K68, T69, T70, 131 to 133 (EDY), R174, Y184, and R221 contribute to the ATP site. Mg(2+) is bound at residue T69. Residues 185–255 (QVPDLQYIVG…VAAQALDMLN (71 aa)) form a small ATPAse domain (RuvB-S) region. The interval 258-336 (AEGFDYMDRK…HFGITPPEMP (79 aa)) is head domain (RuvB-H). 3 residues coordinate DNA: R294, R313, and R318.

Belongs to the RuvB family. Homohexamer. Forms an RuvA(8)-RuvB(12)-Holliday junction (HJ) complex. HJ DNA is sandwiched between 2 RuvA tetramers; dsDNA enters through RuvA and exits via RuvB. An RuvB hexamer assembles on each DNA strand where it exits the tetramer. Each RuvB hexamer is contacted by two RuvA subunits (via domain III) on 2 adjacent RuvB subunits; this complex drives branch migration. In the full resolvosome a probable DNA-RuvA(4)-RuvB(12)-RuvC(2) complex forms which resolves the HJ.

It is found in the cytoplasm. It catalyses the reaction ATP + H2O = ADP + phosphate + H(+). Its function is as follows. The RuvA-RuvB-RuvC complex processes Holliday junction (HJ) DNA during genetic recombination and DNA repair, while the RuvA-RuvB complex plays an important role in the rescue of blocked DNA replication forks via replication fork reversal (RFR). RuvA specifically binds to HJ cruciform DNA, conferring on it an open structure. The RuvB hexamer acts as an ATP-dependent pump, pulling dsDNA into and through the RuvAB complex. RuvB forms 2 homohexamers on either side of HJ DNA bound by 1 or 2 RuvA tetramers; 4 subunits per hexamer contact DNA at a time. Coordinated motions by a converter formed by DNA-disengaged RuvB subunits stimulates ATP hydrolysis and nucleotide exchange. Immobilization of the converter enables RuvB to convert the ATP-contained energy into a lever motion, pulling 2 nucleotides of DNA out of the RuvA tetramer per ATP hydrolyzed, thus driving DNA branch migration. The RuvB motors rotate together with the DNA substrate, which together with the progressing nucleotide cycle form the mechanistic basis for DNA recombination by continuous HJ branch migration. Branch migration allows RuvC to scan DNA until it finds its consensus sequence, where it cleaves and resolves cruciform DNA. This is Holliday junction branch migration complex subunit RuvB from Enterobacter sp. (strain 638).